A 245-amino-acid chain; its full sequence is 1-(5-phosphoribosyl)-5-[(5-phosphoribosylamino)methylideneamino] imidazole-4-carboxamide isomerase (245 aa).

Residue Asp15 is the Proton acceptor of the active site. Asp135 acts as the Proton donor in catalysis.

This sequence belongs to the HisA/HisF family.

The protein localises to the cytoplasm. It catalyses the reaction 1-(5-phospho-beta-D-ribosyl)-5-[(5-phospho-beta-D-ribosylamino)methylideneamino]imidazole-4-carboxamide = 5-[(5-phospho-1-deoxy-D-ribulos-1-ylimino)methylamino]-1-(5-phospho-beta-D-ribosyl)imidazole-4-carboxamide. It functions in the pathway amino-acid biosynthesis; L-histidine biosynthesis; L-histidine from 5-phospho-alpha-D-ribose 1-diphosphate: step 4/9. The polypeptide is 1-(5-phosphoribosyl)-5-[(5-phosphoribosylamino)methylideneamino] imidazole-4-carboxamide isomerase (Haloquadratum walsbyi (strain DSM 16790 / HBSQ001)).